The chain runs to 332 residues: Glyceraldehyde-3-phosphate dehydrogenase (332 aa).

Residues 10–11, aspartate 36, lysine 81, and serine 116 each bind NAD(+); that span reads RI. D-glyceraldehyde 3-phosphate is bound by residues 150 to 152, threonine 181, arginine 197, 210 to 211, and arginine 233; these read SCT and TK. Catalysis depends on cysteine 151, which acts as the Nucleophile. Residue asparagine 314 coordinates NAD(+).

It belongs to the glyceraldehyde-3-phosphate dehydrogenase family. In terms of assembly, homotetramer.

It is found in the cytoplasm. It carries out the reaction D-glyceraldehyde 3-phosphate + phosphate + NAD(+) = (2R)-3-phospho-glyceroyl phosphate + NADH + H(+). The protein operates within carbohydrate degradation; glycolysis; pyruvate from D-glyceraldehyde 3-phosphate: step 1/5. In terms of biological role, catalyzes the oxidative phosphorylation of glyceraldehyde 3-phosphate (G3P) to 1,3-bisphosphoglycerate (BPG) using the cofactor NAD. The first reaction step involves the formation of a hemiacetal intermediate between G3P and a cysteine residue, and this hemiacetal intermediate is then oxidized to a thioester, with concomitant reduction of NAD to NADH. The reduced NADH is then exchanged with the second NAD, and the thioester is attacked by a nucleophilic inorganic phosphate to produce BPG. The polypeptide is Glyceraldehyde-3-phosphate dehydrogenase (gapA) (Helicobacter pylori (strain J99 / ATCC 700824) (Campylobacter pylori J99)).